A 454-amino-acid chain; its full sequence is uncharacterized protein (454 aa).

Residues 364-405 (CSRPGCDAPAYHSEVHHVTPWTTTHRTDINDLTLACGPDNRL) form the HNH domain.

This sequence belongs to the Rv1128c/1148c/1588c/1702c/1945/3466 family.

This is an uncharacterized protein from Mycobacterium tuberculosis (strain ATCC 25618 / H37Rv).